We begin with the raw amino-acid sequence, 408 residues long: Glucose-1-phosphate adenylyltransferase (408 aa).

Alpha-D-glucose 1-phosphate-binding positions include Y100, G165, 180–181 (EK), and S198.

This sequence belongs to the bacterial/plant glucose-1-phosphate adenylyltransferase family. As to quaternary structure, homotetramer.

It catalyses the reaction alpha-D-glucose 1-phosphate + ATP + H(+) = ADP-alpha-D-glucose + diphosphate. It functions in the pathway glycan biosynthesis; glycogen biosynthesis. In terms of biological role, involved in the biosynthesis of ADP-glucose, a building block required for the elongation reactions to produce glycogen. Catalyzes the reaction between ATP and alpha-D-glucose 1-phosphate (G1P) to produce pyrophosphate and ADP-Glc. This Cutibacterium acnes (strain DSM 16379 / KPA171202) (Propionibacterium acnes) protein is Glucose-1-phosphate adenylyltransferase.